The sequence spans 184 residues: Ethylene-responsive transcription factor ERF024 (184 aa).

A disordered region spans residues 1-21 (MQGTSKDNGGRHPLYRGVRQR). Residues 14 to 72 (LYRGVRQRKNSNKWVSEIREPRKPNRIWLGTFSTPEMAAIAYDVAALALKGSQAELNFP) constitute a DNA-binding region (AP2/ERF).

Belongs to the AP2/ERF transcription factor family. ERF subfamily.

It is found in the nucleus. Functionally, probably acts as a transcriptional activator. Binds to the GCC-box pathogenesis-related promoter element. May be involved in the regulation of gene expression by stress factors and by components of stress signal transduction pathways. In Arabidopsis thaliana (Mouse-ear cress), this protein is Ethylene-responsive transcription factor ERF024 (ERF024).